A 67-amino-acid chain; its full sequence is Probable tautomerase K2 (67 aa).

Proline 2 (proton acceptor; via imino nitrogen) is an active-site residue.

The protein belongs to the 4-oxalocrotonate tautomerase family.

This Dickeya dadantii (strain 3937) (Erwinia chrysanthemi (strain 3937)) protein is Probable tautomerase K2.